The primary structure comprises 83 residues: Small ribosomal subunit protein bS20 (83 aa).

It belongs to the bacterial ribosomal protein bS20 family.

Binds directly to 16S ribosomal RNA. In Staphylococcus haemolyticus (strain JCSC1435), this protein is Small ribosomal subunit protein bS20.